The sequence spans 133 residues: Secreted effector protein SteB (133 aa).

Its subcellular location is the secreted. It is found in the host cytoplasm. Functionally, effector proteins function to alter host cell physiology and promote bacterial survival in host tissues. The polypeptide is Secreted effector protein SteB (steB) (Salmonella typhimurium (strain 14028s / SGSC 2262)).